The sequence spans 114 residues: NADH dehydrogenase [ubiquinone] 1 subunit C2, isoform 2 (114 aa).

A helical transmembrane segment spans residues 56–75; the sequence is GLHRQLLYITAFFFAGYYLV.

Belongs to the complex I NDUFC2 subunit family. In terms of assembly, complex I is composed of 45 different subunits.

It localises to the mitochondrion inner membrane. Functionally, accessory subunit of the mitochondrial membrane respiratory chain NADH dehydrogenase (Complex I), that is believed not to be involved in catalysis. Complex I functions in the transfer of electrons from NADH to the respiratory chain. The immediate electron acceptor for the enzyme is believed to be ubiquinone. This chain is NADH dehydrogenase [ubiquinone] 1 subunit C2, isoform 2 (NDUFC2-KCTD14), found in Homo sapiens (Human).